The sequence spans 267 residues: Small ribosomal subunit protein uS5 (267 aa).

The interval 1-37 (MADEAPARSGFRGGFGSRGGRGGRGRGRGRWARGRGK) is disordered. A compositionally biased stretch (gly residues) spans 11-20 (FRGGFGSRGG). Residues 21 to 34 (RGGRGRGRGRWARG) show a composition bias toward basic residues. S60 carries the post-translational modification Phosphoserine. Residues 85–148 (LKDEVLKIMP…ILAKLSVVPV (64 aa)) enclose the S5 DRBM domain.

This sequence belongs to the universal ribosomal protein uS5 family.

Functionally, component of the ribosome, a large ribonucleoprotein complex responsible for the synthesis of proteins in the cell. The small ribosomal subunit (SSU) binds messenger RNAs (mRNAs) and translates the encoded message by selecting cognate aminoacyl-transfer RNA (tRNA) molecules. The large subunit (LSU) contains the ribosomal catalytic site termed the peptidyl transferase center (PTC), which catalyzes the formation of peptide bonds, thereby polymerizing the amino acids delivered by tRNAs into a polypeptide chain. The nascent polypeptides leave the ribosome through a tunnel in the LSU and interact with protein factors that function in enzymatic processing, targeting, and the membrane insertion of nascent chains at the exit of the ribosomal tunnel. Plays a role in the assembly and function of the 40S ribosomal subunit. Mutations in this protein affects the control of translational fidelity. Involved in nucleolar processing of pre-18S ribosomal RNA and ribosome assembly. Has a specific developmental role during oogenesis. The chain is Small ribosomal subunit protein uS5 (RpS2) from Drosophila melanogaster (Fruit fly).